A 406-amino-acid polypeptide reads, in one-letter code: LIM/homeobox protein Lhx1 (406 aa).

LIM zinc-binding domains follow at residues 4–54 (CAGC…CKND) and 63–117 (CAGC…CKED). Disordered stretches follow at residues 128–189 (NSLH…TIKA) and 293–374 (YDFF…EVFG). The segment covering 137-148 (SDPSLSPDSQDP) has biased composition (low complexity). Residues 151 to 167 (DDAKDSESANVSDKEGG) are compositionally biased toward basic and acidic residues. The residue at position 162 (serine 162) is a Phosphoserine. Positions 180–239 (RRGPRTTIKAKQLETLKAAFAATPKPTRHIREQLAQETGLNMRVIQVWFQNRRSKERRMK) form a DNA-binding region, homeobox. A compositionally biased stretch (low complexity) spans 315-327 (PSSGPSGTPLGGL). Residues 352–362 (GDSPSPEPSLP) show a composition bias toward pro residues.

Interacts with LDB1 via the tandem LIM domains.

The protein resides in the nucleus. Potential transcription factor. May play a role in early mesoderm formation and later in lateral mesoderm differentiation and neurogenesis. In Saimiri boliviensis boliviensis (Bolivian squirrel monkey), this protein is LIM/homeobox protein Lhx1 (LHX1).